The primary structure comprises 350 residues: Alcohol dehydrogenase 1 (350 aa).

The Zn(2+) site is built by C46, H69, C100, C103, C106, C114, and C156. Residues 180-186 (GAAGGLG), D204, K209, 271-273 (VGL), and R343 contribute to the NAD(+) site.

It belongs to the zinc-containing alcohol dehydrogenase family. In terms of assembly, homotetramer. Zn(2+) is required as a cofactor.

It is found in the cytoplasm. The enzyme catalyses a primary alcohol + NAD(+) = an aldehyde + NADH + H(+). It catalyses the reaction a secondary alcohol + NAD(+) = a ketone + NADH + H(+). The chain is Alcohol dehydrogenase 1 (ADH1) from Kluyveromyces lactis (strain ATCC 8585 / CBS 2359 / DSM 70799 / NBRC 1267 / NRRL Y-1140 / WM37) (Yeast).